The following is a 464-amino-acid chain: ATP synthase subunit beta (464 aa).

An ATP-binding site is contributed by 148–155; sequence GGAGVGKT.

It belongs to the ATPase alpha/beta chains family. As to quaternary structure, F-type ATPases have 2 components, CF(1) - the catalytic core - and CF(0) - the membrane proton channel. CF(1) has five subunits: alpha(3), beta(3), gamma(1), delta(1), epsilon(1). CF(0) has three main subunits: a(1), b(2) and c(9-12). The alpha and beta chains form an alternating ring which encloses part of the gamma chain. CF(1) is attached to CF(0) by a central stalk formed by the gamma and epsilon chains, while a peripheral stalk is formed by the delta and b chains.

It localises to the cell inner membrane. The enzyme catalyses ATP + H2O + 4 H(+)(in) = ADP + phosphate + 5 H(+)(out). Functionally, produces ATP from ADP in the presence of a proton gradient across the membrane. The catalytic sites are hosted primarily by the beta subunits. This is ATP synthase subunit beta from Marinobacter nauticus (strain ATCC 700491 / DSM 11845 / VT8) (Marinobacter aquaeolei).